The sequence spans 1755 residues: Transposon Ty1-ER1 Gag-Pol polyprotein (1755 aa).

Composition is skewed to polar residues over residues 1-23 (MESQ…SVTS), 48-60 (TKAN…TPAS), and 127-152 (QSQF…GNTF). 3 disordered regions span residues 1-93 (MESQ…MMTQ), 126-174 (PQSQ…PPPM), and 352-421 (GSRN…SKST). The span at 153–165 (TDSSSADSDMTST) shows a compositional bias: low complexity. An RNA-binding region spans residues 299 to 401 (NNGIHINNKV…NSKSKTARAH (103 aa)). Residues 402-418 (NVSTSNNSPSTDNDSIS) show a composition bias toward low complexity. A Phosphoserine modification is found at Ser416. The For protease activity; shared with dimeric partner role is filled by Asp461. Positions 583–640 (NVHTSESTRKYPYPFIHRMLAHANAQTIRYSLKNNTITYFNESDVDWSSAIDYQCPDC) are integrase-type zinc finger-like. Positions 660–835 (NSYEPFQYLH…AGLDISTLLP (176 aa)) constitute an Integrase catalytic domain. Asp671 and Asp736 together coordinate Mg(2+). Disordered regions lie at residues 956–1087 (SKAV…ETEK), 1092–1111 (RSPS…NIVP), and 1130–1171 (DLPL…DSNA). The span at 960–969 (SPTDSTPPST) shows a compositional bias: low complexity. The span at 1005–1015 (STPQISNIEST) shows a compositional bias: polar residues. The span at 1038-1053 (ESSHASKSKDFRHSDS) shows a compositional bias: basic and acidic residues. Polar residues-rich tracts occupy residues 1054-1082 (YSEN…QISD) and 1101-1111 (PENNSSHNIVP). The short motif at 1178–1212 (KKRSLEDNETEIKVSRDTWNTKNMRSLEPPRSKKR) is the Bipartite nuclear localization signal element. The Reverse transcriptase Ty1/copia-type domain maps to 1338–1476 (NNYYITQLDI…DILGLEIKYQ (139 aa)). 6 residues coordinate Mg(2+): Asp1346, Asp1427, Asp1428, Asp1610, Glu1652, and Asp1685. Positions 1610-1752 (DASYGNQPYY…IKTFKLLTNK (143 aa)) constitute an RNase H Ty1/copia-type domain.

As to quaternary structure, the capsid protein forms a homotrimer, from which the VLPs are assembled. The protease is a homodimer, whose active site consists of two apposed aspartic acid residues. Post-translationally, initially, virus-like particles (VLPs) are composed of the structural unprocessed proteins Gag and Gag-Pol, and also contain the host initiator methionine tRNA (tRNA(i)-Met) which serves as a primer for minus-strand DNA synthesis, and a dimer of genomic Ty RNA. Processing of the polyproteins occurs within the particle and proceeds by an ordered pathway, called maturation. First, the protease (PR) is released by autocatalytic cleavage of the Gag-Pol polyprotein yielding capsid protein p45 and a Pol-p154 precursor protein. This cleavage is a prerequisite for subsequent processing of Pol-p154 at the remaining sites to release the mature structural and catalytic proteins. Maturation takes place prior to the RT reaction and is required to produce transposition-competent VLPs.

It is found in the cytoplasm. It localises to the nucleus. The enzyme catalyses DNA(n) + a 2'-deoxyribonucleoside 5'-triphosphate = DNA(n+1) + diphosphate. The catalysed reaction is Endonucleolytic cleavage to 5'-phosphomonoester.. In terms of biological role, capsid protein (CA) is the structural component of the virus-like particle (VLP), forming the shell that encapsulates the retrotransposons dimeric RNA genome. The particles are assembled from trimer-clustered units and there are holes in the capsid shells that allow for the diffusion of macromolecules. CA also has nucleocapsid-like chaperone activity, promoting primer tRNA(i)-Met annealing to the multipartite primer-binding site (PBS), dimerization of Ty1 RNA and initiation of reverse transcription. Functionally, the aspartyl protease (PR) mediates the proteolytic cleavages of the Gag and Gag-Pol polyproteins after assembly of the VLP. Its function is as follows. Reverse transcriptase/ribonuclease H (RT) is a multifunctional enzyme that catalyzes the conversion of the retro-elements RNA genome into dsDNA within the VLP. The enzyme displays a DNA polymerase activity that can copy either DNA or RNA templates, and a ribonuclease H (RNase H) activity that cleaves the RNA strand of RNA-DNA heteroduplexes during plus-strand synthesis and hydrolyzes RNA primers. The conversion leads to a linear dsDNA copy of the retrotransposon that includes long terminal repeats (LTRs) at both ends. Integrase (IN) targets the VLP to the nucleus, where a subparticle preintegration complex (PIC) containing at least integrase and the newly synthesized dsDNA copy of the retrotransposon must transit the nuclear membrane. Once in the nucleus, integrase performs the integration of the dsDNA into the host genome. In Saccharomyces cerevisiae (strain ATCC 204508 / S288c) (Baker's yeast), this protein is Transposon Ty1-ER1 Gag-Pol polyprotein (TY1B-ER1).